We begin with the raw amino-acid sequence, 152 residues long: Small ribosomal subunit protein uS9 (152 aa).

Belongs to the universal ribosomal protein uS9 family.

This chain is Small ribosomal subunit protein uS9, found in Mycobacterium ulcerans (strain Agy99).